Reading from the N-terminus, the 114-residue chain is Circadian clock oscillator protein KaiB (114 aa).

The protein belongs to the KaiB family. May undergo a major conformational rearrangment; in the free state forms homooligomers. When bound to KaiC switches to a monomeric thioredoxin-fold (KaiB(fs)). The active oscillator complex is probably KaiC(6):KaiB(6).

Component of the KaiBC clock protein complex, which constitutes the main circadian regulator in cyanobacteria; it may modify the ATPase activity of KaiC. Its function is as follows. May be a metamorphic protein which reversibly switches between an inactive tetrameric fold and a rare, thioredoxin-like monomeric fold (KaiB(fs)). KaiB(fs) binds phospho-KaiC, and perhaps clock output effectors. The sequence is that of Circadian clock oscillator protein KaiB from Prochlorococcus marinus (strain MIT 9211).